The sequence spans 902 residues: Auxin response factor 5 (902 aa).

The segment at residues 158–260 (FCKTLTASDT…QLMVGVRRAN (103 aa)) is a DNA-binding region (TF-B3). Positions 497-543 (SEMVQPQNKLTVNPSASNTSGQEQNLSQSMSAPAKPENSTLSGCSSG) are disordered. The 85-residue stretch at 793–877 (RTYTKVQKTG…RCIRILSPTE (85 aa)) folds into the PB1 domain.

Belongs to the ARF family. As to quaternary structure, homodimers and heterodimers. Interacts with BRX and the auxin-responsive proteins IAA1, IAA12 (BODENLOS), IAA17 and ARF7. In terms of tissue distribution, expressed in the whole plant with a lower expression in leaves. Detected in embryo axis, provascular tissues, procambium and some differentiated vascular regions of mature organs.

It localises to the nucleus. Functionally, auxin response factors (ARFs) are transcriptional factors that bind specifically to the DNA sequence 5'-TGTCTC-3' found in the auxin-responsive promoter elements (AuxREs). Seems to act as transcriptional activator. Formation of heterodimers with Aux/IAA proteins may alter their ability to modulate early auxin response genes expression. Mediates embryo axis formation and vascular tissues differentiation. Functionally redundant with ARF7. May be necessary to counteract AMP1 activity. In Arabidopsis thaliana (Mouse-ear cress), this protein is Auxin response factor 5 (ARF5).